The primary structure comprises 283 residues: MTAIIERAPAKINLGLDIQGKRPDGYHDLSMVLVSVDLCDYITVDHLEEDRILLTSNCPRLPINEHNDVYKAAYLLKERFQISTGVSIFLDKRVPVCAGMGGGSSDAAAAIRALNQLWQLKLSPRQMIDIGMQIGSDVPYCLFAGCAQVTGKGEVVKPINGRLSSWVVLVKPEFGISTRTIFWDIDCETISRVPIEDLVSAIEAGDYQRLLATMGNSLEDISIAKRPFIQKVKDKMLQSGADIALMTGSGPTVFALCQTEKQANRVVNSLKGFCKEVYKVRTL.

K11 is an active-site residue. Residue 95 to 105 participates in ATP binding; that stretch reads PVCAGMGGGSS. Residue D137 is part of the active site.

The protein belongs to the GHMP kinase family. IspE subfamily.

It catalyses the reaction 4-CDP-2-C-methyl-D-erythritol + ATP = 4-CDP-2-C-methyl-D-erythritol 2-phosphate + ADP + H(+). In terms of biological role, catalyzes the phosphorylation of the position 2 hydroxy group of 4-diphosphocytidyl-2C-methyl-D-erythritol. This is Putative 4-diphosphocytidyl-2-C-methyl-D-erythritol kinase from Streptococcus equi subsp. equi (strain 4047).